We begin with the raw amino-acid sequence, 585 residues long: Folylpolyglutamate synthase, mitochondrial (585 aa).

The transit peptide at 1–39 (MSRARCHALFLAAVSPRGATTRVAVRRGLSAWPVLQEPD) directs the protein to the mitochondrion. 103–106 (GKGS) contributes to the ATP binding site. Residues serine 127, glutamate 198, and histidine 226 each contribute to the Mg(2+) site. Residues arginine 361 and aspartate 375 each contribute to the ATP site. Residues 477-497 (EEQVSPDPWSTPGQEQDGPAS) form a disordered region. Serine 537 carries the phosphoserine modification.

The protein belongs to the folylpolyglutamate synthase family. In terms of assembly, monomer. A monovalent cation is required as a cofactor.

It is found in the mitochondrion inner membrane. It localises to the mitochondrion matrix. Its subcellular location is the cytoplasm. The enzyme catalyses (6S)-5,6,7,8-tetrahydrofolyl-(gamma-L-Glu)(n) + L-glutamate + ATP = (6S)-5,6,7,8-tetrahydrofolyl-(gamma-L-Glu)(n+1) + ADP + phosphate + H(+). Its pathway is cofactor biosynthesis; tetrahydrofolylpolyglutamate biosynthesis. In terms of biological role, catalyzes conversion of folates to polyglutamate derivatives allowing concentration of folate compounds in the cell and the intracellular retention of these cofactors, which are important substrates for most of the folate-dependent enzymes that are involved in one-carbon transfer reactions involved in purine, pyrimidine and amino acid synthesis. The protein is Folylpolyglutamate synthase, mitochondrial (FPGS) of Bos taurus (Bovine).